The primary structure comprises 217 residues: Ras-related protein RABA1f (217 aa).

GTP is bound at residue 20–27 (GDSGVGKS). The Effector region motif lies at 42-50 (SKSTIGVEF). GTP is bound by residues 68–72 (DTAGQ), 126–129 (NKAD), and 156–157 (SA). 2 S-geranylgeranyl cysteine lipidation sites follow: cysteine 214 and cysteine 215.

Belongs to the small GTPase superfamily. Rab family.

The protein localises to the cell membrane. Its function is as follows. Intracellular vesicle trafficking and protein transport. This Arabidopsis thaliana (Mouse-ear cress) protein is Ras-related protein RABA1f (RABA1F).